Consider the following 972-residue polypeptide: mRNA transport regulator MTR10 (972 aa).

It is found in the nucleus. Functionally, involved in mRNA transport from nucleus to cytoplasm. This Saccharomyces cerevisiae (strain ATCC 204508 / S288c) (Baker's yeast) protein is mRNA transport regulator MTR10 (MTR10).